A 225-amino-acid chain; its full sequence is Uracil phosphoribosyltransferase (225 aa).

36 to 40 (KGLVR) serves as a coordination point for GTP. Residues Arg86, Arg111, and 145-153 (DPMLATGST) contribute to the 5-phospho-alpha-D-ribose 1-diphosphate site. Uracil-binding positions include Ile210 and 215–217 (GDA). Asp216 lines the 5-phospho-alpha-D-ribose 1-diphosphate pocket.

Belongs to the UPRTase family. Requires Mg(2+) as cofactor.

The enzyme catalyses UMP + diphosphate = 5-phospho-alpha-D-ribose 1-diphosphate + uracil. Its pathway is pyrimidine metabolism; UMP biosynthesis via salvage pathway; UMP from uracil: step 1/1. With respect to regulation, allosterically activated by GTP. Its function is as follows. Catalyzes the conversion of uracil and 5-phospho-alpha-D-ribose 1-diphosphate (PRPP) to UMP and diphosphate. This is Uracil phosphoribosyltransferase from Haloarcula marismortui (strain ATCC 43049 / DSM 3752 / JCM 8966 / VKM B-1809) (Halobacterium marismortui).